The sequence spans 291 residues: Probable cell wall amidase LytH (291 aa).

The signal sequence occupies residues 1–40 (MKKIEAWLSKKGLKNKRTLIVVIAFVLFIIFLFLLLNSNS). Residues 41-105 (EDSGNITITE…WIAGWHTNLD (65 aa)) form the SH3b domain. Residues 118-140 (QGKTIVLDPGHGGSDQGASSNTK) form a disordered region. The region spanning 122-286 (IVLDPGHGGS…LEQAIVDGLK (165 aa)) is the MurNAc-LAA domain.

The protein belongs to the N-acetylmuramoyl-L-alanine amidase 3 family.

It localises to the secreted. Probably involved in cell-wall metabolism. This is Probable cell wall amidase LytH (lytH) from Staphylococcus aureus (strain USA300).